We begin with the raw amino-acid sequence, 258 residues long: NAD kinase (258 aa).

Asp-51 functions as the Proton acceptor in the catalytic mechanism. NAD(+)-binding positions include 51-52, 119-120, Lys-130, Asp-149, 160-165, and Ala-184; these read DG, ND, and TAYSLS.

The protein belongs to the NAD kinase family. Homodimer. It depends on a divalent metal cation as a cofactor.

It is found in the cytoplasm. The enzyme catalyses NAD(+) + ATP = ADP + NADP(+) + H(+). In terms of biological role, involved in the regulation of the intracellular balance between NAD(H) and NADP(H), and is a key enzyme in the biosynthesis of NADP. Catalyzes specifically the phosphorylation on 2'-hydroxyl of the adenosine moiety of NAD to yield NADP. This chain is NAD kinase (NADK), found in Thermotoga maritima (strain ATCC 43589 / DSM 3109 / JCM 10099 / NBRC 100826 / MSB8).